Here is a 274-residue protein sequence, read N- to C-terminus: Dermonecrotic toxin SdSicTox-betaIIB1bx (274 aa).

His5 is a catalytic residue. Residues Glu25 and Asp27 each coordinate Mg(2+). The Nucleophile role is filled by His41. Cystine bridges form between Cys45-Cys51 and Cys47-Cys190. Residue Asp85 participates in Mg(2+) binding.

The protein belongs to the arthropod phospholipase D family. Class II subfamily. It depends on Mg(2+) as a cofactor. Expressed by the venom gland.

The protein localises to the secreted. It carries out the reaction an N-(acyl)-sphingosylphosphocholine = an N-(acyl)-sphingosyl-1,3-cyclic phosphate + choline. The enzyme catalyses an N-(acyl)-sphingosylphosphoethanolamine = an N-(acyl)-sphingosyl-1,3-cyclic phosphate + ethanolamine. The catalysed reaction is a 1-acyl-sn-glycero-3-phosphocholine = a 1-acyl-sn-glycero-2,3-cyclic phosphate + choline. It catalyses the reaction a 1-acyl-sn-glycero-3-phosphoethanolamine = a 1-acyl-sn-glycero-2,3-cyclic phosphate + ethanolamine. In terms of biological role, dermonecrotic toxins cleave the phosphodiester linkage between the phosphate and headgroup of certain phospholipids (sphingolipid and lysolipid substrates), forming an alcohol (often choline) and a cyclic phosphate. This toxin acts on sphingomyelin (SM). It may also act on ceramide phosphoethanolamine (CPE), lysophosphatidylcholine (LPC) and lysophosphatidylethanolamine (LPE), but not on lysophosphatidylserine (LPS), and lysophosphatidylglycerol (LPG). It acts by transphosphatidylation, releasing exclusively cyclic phosphate products as second products. Induces dermonecrosis, hemolysis, increased vascular permeability, edema, inflammatory response, and platelet aggregation. This Sicarius cf. damarensis (strain GJB-2008) (Six-eyed sand spider) protein is Dermonecrotic toxin SdSicTox-betaIIB1bx.